Reading from the N-terminus, the 969-residue chain is Protein translocase subunit SecA (969 aa).

ATP-binding positions include Gln-99, Gly-117 to Thr-121, and Asp-631.

The protein belongs to the SecA family. As to quaternary structure, monomer and homodimer. Part of the essential Sec protein translocation apparatus which comprises SecA, SecYEG and auxiliary proteins SecDF. Other proteins may also be involved.

Its subcellular location is the cell inner membrane. It localises to the cytoplasm. It carries out the reaction ATP + H2O + cellular proteinSide 1 = ADP + phosphate + cellular proteinSide 2.. Functionally, part of the Sec protein translocase complex. Interacts with the SecYEG preprotein conducting channel. Has a central role in coupling the hydrolysis of ATP to the transfer of proteins into and across the cell membrane, serving as an ATP-driven molecular motor driving the stepwise translocation of polypeptide chains across the membrane. The sequence is that of Protein translocase subunit SecA from Chlamydia felis (strain Fe/C-56) (Chlamydophila felis).